A 247-amino-acid polypeptide reads, in one-letter code: UDP-2,3-diacylglucosamine hydrolase (247 aa).

Positions 8, 10, 41, 79, and 114 each coordinate Mn(2+). 79–80 (NR) lines the substrate pocket. Residues aspartate 122, serine 160, aspartate 171, glutamine 174, and histidine 202 each contribute to the substrate site. 2 residues coordinate Mn(2+): histidine 202 and histidine 204.

It belongs to the LpxH family. The cofactor is Mn(2+).

It is found in the cell inner membrane. The catalysed reaction is UDP-2-N,3-O-bis[(3R)-3-hydroxytetradecanoyl]-alpha-D-glucosamine + H2O = 2-N,3-O-bis[(3R)-3-hydroxytetradecanoyl]-alpha-D-glucosaminyl 1-phosphate + UMP + 2 H(+). The protein operates within glycolipid biosynthesis; lipid IV(A) biosynthesis; lipid IV(A) from (3R)-3-hydroxytetradecanoyl-[acyl-carrier-protein] and UDP-N-acetyl-alpha-D-glucosamine: step 4/6. Hydrolyzes the pyrophosphate bond of UDP-2,3-diacylglucosamine to yield 2,3-diacylglucosamine 1-phosphate (lipid X) and UMP by catalyzing the attack of water at the alpha-P atom. Involved in the biosynthesis of lipid A, a phosphorylated glycolipid that anchors the lipopolysaccharide to the outer membrane of the cell. The chain is UDP-2,3-diacylglucosamine hydrolase from Xanthomonas campestris pv. campestris (strain 8004).